We begin with the raw amino-acid sequence, 803 residues long: Putative metal ion transporter C27B12.12c (803 aa).

The segment covering 1–20 (MSFQQPSNGAQGGNNNALEK) has biased composition (polar residues). The interval 1–255 (MSFQQPSNGA…SSDVSGSDEN (255 aa)) is disordered. A compositionally biased stretch (low complexity) spans 21-45 (TSSNEATSSSSTQVSSLSASGISVS). Residues 58–82 (MQVQSSQHLEANVQSPVSSQTTYAT) show a composition bias toward polar residues. Composition is skewed to basic residues over residues 105 to 123 (KPKK…RKKI) and 152 to 166 (QSNK…KHSP). Low complexity-rich tracts occupy residues 181–194 (ALSA…QHAS) and 218–253 (SSSS…SGSD). Residue serine 318 is modified to Phosphoserine. Disordered stretches follow at residues 326–349 (PRLK…QVDE) and 406–431 (FEPH…NNAE). Residues 337–347 (DNEDREVDSQV) are compositionally biased toward acidic residues. The segment covering 406–419 (FEPHWNDLSPHDPN) has biased composition (basic and acidic residues). Over residues 420-430 (DPSSSLHSNNA) the composition is skewed to polar residues. Serine 449 and serine 452 each carry phosphoserine. Transmembrane regions (helical) follow at residues 745 to 765 (ITLI…FGMN) and 776 to 796 (LAWF…GWII).

This sequence belongs to the CorA metal ion transporter (MIT) (TC 1.A.35) family.

Its subcellular location is the cytoplasm. The protein resides in the membrane. The protein is Putative metal ion transporter C27B12.12c of Schizosaccharomyces pombe (strain 972 / ATCC 24843) (Fission yeast).